We begin with the raw amino-acid sequence, 32 residues long: Alpha-conotoxin RgIA (32 aa).

Positions 1-19 (SNKRKNAAMLDMIAQHAIR) are excised as a propeptide. 2 disulfide bridges follow: Cys21-Cys27 and Cys22-Cys31.

It belongs to the conotoxin A superfamily. The disulfide bond CysI-CysIII is important for alpha-9-alpha-10 subtype inhibition, whereas the bond CysII-CysIV contributes to GABA(B) modulation. In terms of tissue distribution, expressed by the venom duct.

The protein resides in the secreted. This toxin target two types of receptors, the nicotinic acetylcholine receptor (nAChR) and the G-protein-coupled receptor GABA(B). It specifically inhibits the alpha-9-alpha-10/CHRNA9-CHRNA10 nAChR, with preference for rat receptors. It interacts with the alpha-10(+)/alpha-9(-)interface of the receptor. It shows a two order of magnitude species difference potency for the rat versus human alpha-9-alpha-10 nAChR, due to the Thr-86 located in the alpha-9 nAChR subunit. This toxin also shows inhibition of high voltage-activated (HVA) calcium channels (Cav2.2) by acting on GABA(B) receptors (GABBR1 and GABBR2). In vivo, this toxin produces an acute antinociceptive effect in peripheral nerve-injured rats, which may be related to the inhibition of immune cell buildup at the site of nerve injury. In addition, when intramuscularly injected into rats following chronic constriction injury of the sciatic nerve, this toxin protects peripheral nervous tissues as well as prevents central maladaptive plasticity by inhibiting glial cell activation. The chain is Alpha-conotoxin RgIA from Conus regius (Crown cone).